The primary structure comprises 676 residues: Zinc finger protein 418 (676 aa).

A KRAB domain is found at 5–91 (VAFEDVAVNF…HSCEMCGAIL (87 aa)). 16 C2H2-type zinc fingers span residues 82–105 (HSCEMCGAILGDILHLADHQGTHH), 230–252 (CYCWECGKSFSKYDSVSNHQRVH), 258–280 (YECGECGKSFSHKGSLVQHQRVH), 286–308 (YECGECGKSFSHKGSLVQHQRVH), 314–336 (YECGECGKSFSQNGTLIKHQRVH), 342–364 (YECEECGKCFTQKGNLIQHQRGH), 370–392 (YECEECGKCFSQKGTLTEHHRVH), 398–420 (YECGECGKSFSRKGHLRNHQRGH), 426–448 (YECGECGKSFSRKGNLIQHQRSH), 454–476 (YECRECRKLFRGKSHLIEHQRVH), 482–504 (YECNECGKSFQDSSGFRVHQRVH), 510–532 (FECSECGKSFPQSCSLLRHRRVH), 538–560 (YECGECGKSFHQSSSLLRHQKTH), 591–613 (YECRECGKTFTRRSAHFKHQRLH), 619–641 (YECSECGKSFAETFSLTEHRRVH), and 647–669 (YECSECGKSFHRSSSLLRHQRVH).

The protein belongs to the krueppel C2H2-type zinc-finger protein family. As to expression, highly expressed in heart.

It localises to the nucleus. Transcriptional repressor. May play a role as regulator of the ubiquitin-proteasome system and autophagy-lysosomal pathway. The chain is Zinc finger protein 418 (ZNF418) from Homo sapiens (Human).